The sequence spans 86 residues: Small ribosomal subunit protein bS20 (86 aa).

Residues 1–27 are disordered; the sequence is MANNKSAKKRAIQAEKRRQHNASRRSM.

It belongs to the bacterial ribosomal protein bS20 family.

Functionally, binds directly to 16S ribosomal RNA. The sequence is that of Small ribosomal subunit protein bS20 from Vibrio cholerae serotype O1 (strain ATCC 39541 / Classical Ogawa 395 / O395).